The following is a 363-amino-acid chain: 3-dehydroquinate synthase (363 aa).

NAD(+) is bound by residues serine 72–lysine 77, threonine 130–threonine 131, lysine 142, and lysine 151. 3 residues coordinate Zn(2+): glutamate 184, histidine 247, and histidine 264.

Belongs to the sugar phosphate cyclases superfamily. Dehydroquinate synthase family. Co(2+) is required as a cofactor. The cofactor is Zn(2+). NAD(+) serves as cofactor.

The protein localises to the cytoplasm. The catalysed reaction is 7-phospho-2-dehydro-3-deoxy-D-arabino-heptonate = 3-dehydroquinate + phosphate. It participates in metabolic intermediate biosynthesis; chorismate biosynthesis; chorismate from D-erythrose 4-phosphate and phosphoenolpyruvate: step 2/7. Catalyzes the conversion of 3-deoxy-D-arabino-heptulosonate 7-phosphate (DAHP) to dehydroquinate (DHQ). The polypeptide is 3-dehydroquinate synthase (Bacillus thuringiensis subsp. konkukian (strain 97-27)).